Consider the following 197-residue polypeptide: RILP-like protein 2 (197 aa).

The region spanning 14–96 (EDEGALAKSP…KQEVEGLRRA (83 aa)) is the RH1 domain. The stretch at 65-153 (LEALVNEGSL…VQEELQCYRS (89 aa)) forms a coiled coil. The 66-residue stretch at 119 to 184 (RPRFTLQELR…GNGEKEERTI (66 aa)) folds into the RH2 domain.

In terms of assembly, homodimer. Interacts (via N-terminus) with MYO5A, the interaction is required for its role in dendrite formation. Interacts with RAC1. Interacts with RAB8A; interaction is dependent on the phosphorylation of RAB8A on 'Thr-72'. Interacts with RAB10 and RAB12; interaction is dependent on the phosphorylation of 'Thr-73' on RAB10 and 'Ser-105' on RAB12.

Its subcellular location is the cytoplasm. It is found in the cytosol. It localises to the cytoskeleton. The protein resides in the microtubule organizing center. The protein localises to the centrosome. Its subcellular location is the cell projection. It is found in the cilium. Involved in cell shape and neuronal morphogenesis, positively regulating the establishment and maintenance of dendritic spines. Plays a role in cellular protein transport, including protein transport away from primary cilia. May function via activation of RAC1 and PAK1. The sequence is that of RILP-like protein 2 (Rilpl2) from Rattus norvegicus (Rat).